Here is a 412-residue protein sequence, read N- to C-terminus: uncharacterized protein (412 aa).

Histidine 49 lines the Zn(2+) pocket. The active-site Proton acceptor is glutamate 52. Residues histidine 53 and glutamate 129 each coordinate Zn(2+).

The protein belongs to the peptidase M16 family. Zn(2+) is required as a cofactor.

This is an uncharacterized protein from Rickettsia bellii (strain RML369-C).